The primary structure comprises 170 residues: Ubiquitin-conjugating enzyme E2 2 (170 aa).

The region spanning 4–150 (PARRRLMRDF…VKETVEKSWE (147 aa)) is the UBC core domain. Cysteine 88 (glycyl thioester intermediate) is an active-site residue. The tract at residues 148-170 (SWEDDLKDMDDGDDDDDDDDDDD) is disordered. Positions 152–170 (DLKDMDDGDDDDDDDDDDD) are enriched in acidic residues.

The protein belongs to the ubiquitin-conjugating enzyme family.

The protein resides in the cytoplasm. Its subcellular location is the nucleus. It carries out the reaction S-ubiquitinyl-[E1 ubiquitin-activating enzyme]-L-cysteine + [E2 ubiquitin-conjugating enzyme]-L-cysteine = [E1 ubiquitin-activating enzyme]-L-cysteine + S-ubiquitinyl-[E2 ubiquitin-conjugating enzyme]-L-cysteine.. It participates in protein modification; protein ubiquitination. Functionally, catalyzes the covalent attachment of ubiquitin to other proteins. Plays a role in transcription regulation by catalyzing the monoubiquitination of histone H2B to form H2BK123ub1. H2BK123ub1 gives a specific tag for epigenetic transcriptional activation and is also a prerequisite for H3K4me and H3K79me formation. Also involved in postreplication repair of UV-damaged DNA, in N-end rule-dependent protein degradation and in sporulation. The chain is Ubiquitin-conjugating enzyme E2 2 (UBC2) from Eremothecium gossypii (strain ATCC 10895 / CBS 109.51 / FGSC 9923 / NRRL Y-1056) (Yeast).